We begin with the raw amino-acid sequence, 787 residues long: Endonuclease MutS2 (787 aa).

Position 335-342 (335-342) interacts with ATP; it reads GPNTGGKT. A Smr domain is found at 712 to 787; it reads LDLRGERYED…GLGNTVIELK (76 aa).

This sequence belongs to the DNA mismatch repair MutS family. MutS2 subfamily. In terms of assembly, homodimer. Binds to stalled ribosomes, contacting rRNA.

Its function is as follows. Endonuclease that is involved in the suppression of homologous recombination and thus may have a key role in the control of bacterial genetic diversity. Acts as a ribosome collision sensor, splitting the ribosome into its 2 subunits. Detects stalled/collided 70S ribosomes which it binds and splits by an ATP-hydrolysis driven conformational change. Acts upstream of the ribosome quality control system (RQC), a ribosome-associated complex that mediates the extraction of incompletely synthesized nascent chains from stalled ribosomes and their subsequent degradation. Probably generates substrates for RQC. This chain is Endonuclease MutS2, found in Shouchella clausii (strain KSM-K16) (Alkalihalobacillus clausii).